The chain runs to 66 residues: Putative antitoxin APE_0279a.1 (66 aa).

This sequence belongs to the UPF0165 family.

Possibly the antitoxin component of a type II toxin-antitoxin (TA) system. In Aeropyrum pernix (strain ATCC 700893 / DSM 11879 / JCM 9820 / NBRC 100138 / K1), this protein is Putative antitoxin APE_0279a.1.